A 168-amino-acid chain; its full sequence is Large ribosomal subunit protein uL24 (168 aa).

The tract at residues 112-168 (LEGKDPRKQPKEAPKAAEKPAKEEPKKETPKAEEKPAKEEPKETKVEKKSEEKEDEN) is disordered.

This sequence belongs to the universal ribosomal protein uL24 family. In terms of assembly, part of the 50S ribosomal subunit.

Functionally, one of two assembly initiator proteins, it binds directly to the 5'-end of the 23S rRNA, where it nucleates assembly of the 50S subunit. Located at the polypeptide exit tunnel on the outside of the subunit. The polypeptide is Large ribosomal subunit protein uL24 (Nitrosopumilus maritimus (strain SCM1)).